The chain runs to 373 residues: Chaperone protein DnaJ (373 aa).

Residues 5–70 (DYYELLEVDR…EKRALYDQYG (66 aa)) enclose the J domain. A CR-type zinc finger spans residues 134–211 (GTQKEVHYSF…CSGKGYRIEK (78 aa)). Cys147, Cys150, Cys163, Cys166, Cys185, Cys188, Cys199, and Cys202 together coordinate Zn(2+). CXXCXGXG motif repeat units follow at residues 147–154 (CSACKGTG), 163–170 (CPECHGRG), 185–192 (CPRCHGQG), and 199–206 (CEECSGKG).

Belongs to the DnaJ family. As to quaternary structure, homodimer. The cofactor is Zn(2+).

It localises to the cytoplasm. Its function is as follows. Participates actively in the response to hyperosmotic and heat shock by preventing the aggregation of stress-denatured proteins and by disaggregating proteins, also in an autonomous, DnaK-independent fashion. Unfolded proteins bind initially to DnaJ; upon interaction with the DnaJ-bound protein, DnaK hydrolyzes its bound ATP, resulting in the formation of a stable complex. GrpE releases ADP from DnaK; ATP binding to DnaK triggers the release of the substrate protein, thus completing the reaction cycle. Several rounds of ATP-dependent interactions between DnaJ, DnaK and GrpE are required for fully efficient folding. Also involved, together with DnaK and GrpE, in the DNA replication of plasmids through activation of initiation proteins. This is Chaperone protein DnaJ from Nitratiruptor sp. (strain SB155-2).